The sequence spans 182 residues: Vacuolar protein sorting-associated protein 29 (182 aa).

N6-acetyllysine is present on Lys-50.

Belongs to the VPS29 family. As to quaternary structure, component of the commander complex consisting of the CCC subcomplex and the retriever subcomplex. Component of the heterotrimeric retriever complex formed by VPS26C, VPS29 and VPS35L; within the complex interacts with VPS35L. Component of the heterotrimeric retromer cargo-selective complex (CSC), also described as vacuolar protein sorting subcomplex (VPS) formed by VPS26 (VPS26A or VPS26B), VPS29 and VPS35. The CSC has a highly elongated structure with VPS26 and VPS29 binding independently at opposite distal ends of VPS35 as central platform. The CSC is believed to associate with variable sorting nexins to form functionally distinct retromer complex variants. The originally described retromer complex (also called SNX-BAR retromer) is a pentamer containing the CSC and a heterodimeric membrane-deforming subcomplex formed between SNX1 or SNX2 and SNX5 or SNX6 (also called SNX-BAR subcomplex); the respective CSC and SNX-BAR subcomplexes associate with low affinity. The CSC associates with SNX3 to form a SNX3-retromer complex. The CSC associates with SNX27, the WASH complex and the SNX-BAR subcomplex to form the SNX27-retromer complex. Interacts with VPS26A, VPS35, SNX1, SNX2, SNX3, SNX27, WASHC5. Interacts with TBC1D5; this interaction is blocked by VPS35L in the retriever complex. Interacts with SNX17; the interaction is indirect; SNX17 (via its C-terminus) interacts with the retriever complex (via VPS26C and VPS35L). Interacts with VPS26B and ANKRD27.

The protein localises to the cytoplasm. It localises to the membrane. Its subcellular location is the endosome membrane. Component of the commander complex that is essential for endosomal recycling of transmembrane cargos; the commander complex is composed of the CCC subcomplex and the retriever subcomplex. Component of the retriever complex, which is a heterotrimeric complex related to retromer cargo-selective complex (CSC) and essential for retromer-independent retrieval and recycling of numerous cargos such as integrin alpha-5/beta-1 (ITGA5:ITGB1). Component of the retromer cargo-selective complex (CSC). The CSC is believed to be the core functional component of retromer or respective retromer complex variants acting to prevent missorting of selected transmembrane cargo proteins into the lysosomal degradation pathway. The recruitment of the CSC to the endosomal membrane involves RAB7A and SNX3. The SNX-BAR retromer mediates retrograde transport of cargo proteins from endosomes to the trans-Golgi network (TGN) and is involved in endosome-to-plasma membrane transport for cargo protein recycling. The SNX3-retromer mediates the retrograde endosome-to-TGN transport of WLS distinct from the SNX-BAR retromer pathway. The SNX27-retromer is believed to be involved in endosome-to-plasma membrane trafficking and recycling of a broad spectrum of cargo proteins. The CSC seems to act as recruitment hub for other proteins, such as the WASH complex and TBC1D5. Required to regulate transcytosis of the polymeric immunoglobulin receptor (pIgR-pIgA). In the endosomes, retriever complex drives the retrieval and recycling of NxxY-motif-containing cargo proteins by coupling to SNX17, a cargo essential for the homeostatic maintenance of numerous cell surface proteins associated with processes that include cell migration, cell adhesion, nutrient supply and cell signaling. The recruitment of the retriever complex to the endosomal membrane involves CCC and WASH complexes. Involved in GLUT1 endosome-to-plasma membrane trafficking; the function is dependent of association with ANKRD27. This is Vacuolar protein sorting-associated protein 29 (Vps29) from Mus musculus (Mouse).